Consider the following 358-residue polypeptide: WAT1-related protein At3g28080 (358 aa).

The next 10 helical transmembrane spans lie at 12-32, 42-62, 81-101, 105-125, 137-157, 187-207, 219-239, 245-265, 283-303, and 308-328; these read AVFLTAMLAGETSIVGLSTLF, IYPFLSYSYLLASLLLLPSLF, IGLLGFLGSMYVITGGIGIEY, TLASAIGNIVPALTFILAVIF, SVAKVMGTILSLIGAFVVIFY, WLIGGAILTIQGIFVSVSFIL, FTVSILYILCISIVTSMIGLV, PSIWIIHFDITLFTIVTTGII, LYLAIFKPLSILIAVVMGTIF, and LYLGCLIGGILITLGFYVVMW. The EamA domain maps to 27 to 155; that stretch reads GLSTLFKVAT…LSLIGAFVVI (129 aa).

It belongs to the drug/metabolite transporter (DMT) superfamily. Plant drug/metabolite exporter (P-DME) (TC 2.A.7.4) family.

It is found in the membrane. The polypeptide is WAT1-related protein At3g28080 (Arabidopsis thaliana (Mouse-ear cress)).